A 214-amino-acid polypeptide reads, in one-letter code: Small ribosomal subunit protein eS6 (214 aa).

This sequence belongs to the eukaryotic ribosomal protein eS6 family.

The polypeptide is Small ribosomal subunit protein eS6 (Saccharolobus islandicus (strain L.S.2.15 / Lassen #1) (Sulfolobus islandicus)).